Consider the following 93-residue polypeptide: Small ribosomal subunit protein bS20 (93 aa).

The protein belongs to the bacterial ribosomal protein bS20 family.

Its function is as follows. Binds directly to 16S ribosomal RNA. In Dictyoglomus thermophilum (strain ATCC 35947 / DSM 3960 / H-6-12), this protein is Small ribosomal subunit protein bS20.